A 166-amino-acid polypeptide reads, in one-letter code: Ureidoglycolate lyase (166 aa).

This sequence belongs to the ureidoglycolate lyase family. Homodimer. The cofactor is Ni(2+).

The catalysed reaction is (S)-ureidoglycolate = urea + glyoxylate. It functions in the pathway nitrogen metabolism; (S)-allantoin degradation. Catalyzes the catabolism of the allantoin degradation intermediate (S)-ureidoglycolate, generating urea and glyoxylate. Involved in the utilization of allantoin as nitrogen source. In Rhizobium etli (strain CIAT 652), this protein is Ureidoglycolate lyase.